The sequence spans 158 residues: NAD(P)H-quinone oxidoreductase subunit J, chloroplastic (158 aa).

It belongs to the complex I 30 kDa subunit family. NDH is composed of at least 16 different subunits, 5 of which are encoded in the nucleus.

Its subcellular location is the plastid. The protein resides in the chloroplast thylakoid membrane. The enzyme catalyses a plastoquinone + NADH + (n+1) H(+)(in) = a plastoquinol + NAD(+) + n H(+)(out). It catalyses the reaction a plastoquinone + NADPH + (n+1) H(+)(in) = a plastoquinol + NADP(+) + n H(+)(out). Functionally, NDH shuttles electrons from NAD(P)H:plastoquinone, via FMN and iron-sulfur (Fe-S) centers, to quinones in the photosynthetic chain and possibly in a chloroplast respiratory chain. The immediate electron acceptor for the enzyme in this species is believed to be plastoquinone. Couples the redox reaction to proton translocation, and thus conserves the redox energy in a proton gradient. The sequence is that of NAD(P)H-quinone oxidoreductase subunit J, chloroplastic from Solanum lycopersicum (Tomato).